Reading from the N-terminus, the 1979-residue chain is E3 ubiquitin-protein ligase TTC3 (1979 aa).

Residues 1–230 (MDDFAEGGLS…RHSCMQCVKQ (230 aa)) form an interaction with POLG region. TPR repeat units lie at residues 231–264 (GELM…RPEN) and 266–298 (LLYG…KNTW). At Ser378 the chain carries Phosphoserine. The disordered stretch occupies residues 422 to 457 (CDCHPEFLPPPSQPPRHKGKQKSRNNESEKPSFNSE). TPR repeat units follow at residues 536-572 (VLVV…YPNE) and 576-609 (CLAY…ISRL). The disordered stretch occupies residues 783 to 811 (LAQERMEEDLRESNPPKNEEPEETSDSAQ). Phosphoserine is present on Ser1009. 7 disordered regions span residues 1021 to 1067 (NKGK…GPFA), 1214 to 1289 (QPDV…EEAK), 1402 to 1427 (QGSA…SSDS), 1574 to 1601 (KNDG…DEKT), 1757 to 1776 (MDSA…GSPT), 1788 to 1821 (KGAS…KKPS), and 1873 to 1927 (DEQK…PAPD). Residues 1036–1050 (VGSGAASVAPSSEAV) show a composition bias toward low complexity. Ser1060 is modified (phosphoserine). The segment covering 1214–1227 (QPDVKSEALSEDVK) has biased composition (basic and acidic residues). A compositionally biased stretch (low complexity) spans 1248 to 1257 (DSDSSSGSAS). Residues 1576 to 1586 (DGFDKECEPHP) are compositionally biased toward basic and acidic residues. 2 stretches are compositionally biased toward polar residues: residues 1788-1799 (KGASQVSPSEQS) and 1808-1821 (GQAT…KKPS). Ser1794 is modified (phosphoserine). A compositionally biased stretch (basic and acidic residues) spans 1873–1890 (DEQKKKKPNPGKDKKTSE). The segment at 1931 to 1971 (CEICHEIFKSKNMRVLKCGHKFHKGCFKQWLKGQSTCPTCG) adopts an RING-type; atypical zinc-finger fold.

As to quaternary structure, interacts (when phosphorylated on Ser-378) with AKT1, AKT2 and AKT3 (when phosphorylated). Interacts with CIT. Interacts with POLG. Interacts with HSP70. Interacts with SMURF2. Phosphorylation on Ser-378 by Akt is required for ubiquitin ligase activity. In terms of processing, proteolytically cleaved into differently sized N- and C-terminal fragments.

The protein localises to the nucleus. It localises to the cytoplasm. The protein resides in the golgi apparatus. The catalysed reaction is S-ubiquitinyl-[E2 ubiquitin-conjugating enzyme]-L-cysteine + [acceptor protein]-L-lysine = [E2 ubiquitin-conjugating enzyme]-L-cysteine + N(6)-ubiquitinyl-[acceptor protein]-L-lysine.. It participates in protein modification; protein ubiquitination. Functionally, E3 ubiquitin-protein ligase which catalyzes the formation of 'Lys-48'-polyubiquitin chains. Mediates the ubiquitination and subsequent degradation of phosphorylated Akt (AKT1, AKT2 and AKT3) in the nucleus. Acts as a terminal regulator of Akt signaling after activation; its phosphorylation by Akt, which is a prerequisite for ubiquitin ligase activity, suggests the existence of a regulation mechanism required to control Akt levels after activation. Positively regulates TGFB1-induced epithelial-mesenchymal transition and myofibroblast differentiation by mediating the ubiquitination and subsequent degradation of SMURF2. Regulates neuronal differentiation by regulating actin remodeling and Golgi organization via a signaling cascade involving RHOA, CIT and ROCK. Inhibits cell proliferation. This chain is E3 ubiquitin-protein ligase TTC3 (Ttc3), found in Mus musculus (Mouse).